Here is a 524-residue protein sequence, read N- to C-terminus: Cytochrome P450 4F3 (524 aa).

A helical transmembrane segment spans residues 15–35 (AASPWLLLLLVGASCLLAYIL). Cys-468 is a heme binding site.

Belongs to the cytochrome P450 family. Heme is required as a cofactor.

The protein resides in the endoplasmic reticulum membrane. It localises to the microsome membrane. It carries out the reaction leukotriene B4 + reduced [NADPH--hemoprotein reductase] + O2 = 18-hydroxy-leukotriene B4 + oxidized [NADPH--hemoprotein reductase] + H2O + H(+). The enzyme catalyses leukotriene B4 + reduced [NADPH--hemoprotein reductase] + O2 = 19-hydroxy-leukotriene B4 + oxidized [NADPH--hemoprotein reductase] + H2O + H(+). It functions in the pathway lipid metabolism; leukotriene B4 degradation. Functionally, a cytochrome P450 monooxygenase involved in the metabolism of the pro-inflammatory lipid mediator leukotriene B4 (LTB4). Hydroxylates at the omega-1 and omega-2 positions LTB4. This oxidation step leads to LTB4 inactivation, which is postulated to be a crucial part of the resolution of inflammation. Mechanistically, uses molecular oxygen inserting one oxygen atom into a substrate, and reducing the second into a water molecule, with two electrons provided by NADPH via cytochrome P450 reductase (CPR; NADPH-ferrihemoprotein reductase). This is Cytochrome P450 4F3 from Rattus norvegicus (Rat).